The sequence spans 442 residues: tRNA-2-methylthio-N(6)-dimethylallyladenosine synthase (442 aa).

The MTTase N-terminal domain maps to 5 to 122 (KKVFIKTLGC…LPEMIKQKQK (118 aa)). [4Fe-4S] cluster is bound by residues Cys-14, Cys-51, Cys-85, Cys-159, Cys-163, and Cys-166. Residues 145-378 (KAEGAKAYVS…DLLNSNAQII (234 aa)) form the Radical SAM core domain. One can recognise a TRAM domain in the interval 380-442 (RQMVGTNQRI…LPNSLRGELI (63 aa)).

The protein belongs to the methylthiotransferase family. MiaB subfamily. As to quaternary structure, monomer. [4Fe-4S] cluster is required as a cofactor.

Its subcellular location is the cytoplasm. The enzyme catalyses N(6)-dimethylallyladenosine(37) in tRNA + (sulfur carrier)-SH + AH2 + 2 S-adenosyl-L-methionine = 2-methylsulfanyl-N(6)-dimethylallyladenosine(37) in tRNA + (sulfur carrier)-H + 5'-deoxyadenosine + L-methionine + A + S-adenosyl-L-homocysteine + 2 H(+). Catalyzes the methylthiolation of N6-(dimethylallyl)adenosine (i(6)A), leading to the formation of 2-methylthio-N6-(dimethylallyl)adenosine (ms(2)i(6)A) at position 37 in tRNAs that read codons beginning with uridine. This Francisella tularensis subsp. tularensis (strain FSC 198) protein is tRNA-2-methylthio-N(6)-dimethylallyladenosine synthase.